The following is a 954-amino-acid chain: Calsyntenin-1 (954 aa).

The first 25 residues, 1–25 (MRIRGVKPFASAVGLLLGLLYAVDA), serve as a signal peptide directing secretion. Residues 26-833 (AKVNKHKPWI…THQASVVPSA (808 aa)) lie on the Extracellular side of the membrane. Cadherin domains lie at 35–151 (IETT…SPVF) and 152–252 (KEKS…KPSW). N-linked (GlcNAc...) asparagine glycosylation is found at Asn333, Asn353, and Asn552. Residues 834–854 (ATIVIVVCVSFLVFMIILGVF) traverse the membrane as a helical segment. Topologically, residues 855-954 (RIRAAHQRTM…LEWDDSTLTY (100 aa)) are cytoplasmic. The tract at residues 891-954 (TYEDQHSSEE…LEWDDSTLTY (64 aa)) is disordered. Residues 900–935 (EEGDEEEEESEDGEEEDDITSAESDSSEDEAGEQED) show a composition bias toward acidic residues.

The protein belongs to the calsyntenin family. Homooligomer and heterooligomer; mediates both homophilic and heterophilc interactions with clstn2 and clstn3 paralogs via cadherin domains. As to expression, by 48 hours post-fertilization (hpf), widely expressed in the brain, with strong expression in the telencephalon and the midbrain.

The protein resides in the postsynaptic cell membrane. It is found in the endoplasmic reticulum membrane. It localises to the golgi apparatus membrane. Its subcellular location is the cell projection. The protein localises to the neuron projection. Functionally, postsynaptic adhesion molecule involved in vesicle trafficking; required for branching of peripheral but not central axons of sensory neurons. Promotes synapse development by acting as a cell adhesion molecule at the postsynaptic membrane, which associates with presynaptic neurexins. This Danio rerio (Zebrafish) protein is Calsyntenin-1.